The sequence spans 516 residues: L-amino acid oxidase Lm29 (516 aa).

Residues 1 to 18 (MNVFFMFSLLFLAALGSC) form the signal peptide. Cysteine 28 and cysteine 191 are oxidised to a cystine. FAD-binding positions include 61 to 62 (MS), 81 to 82 (EA), arginine 89, and 105 to 108 (GPMR). Arginine 108 serves as a coordination point for substrate. The N-linked (GlcNAc...) asparagine glycan is linked to asparagine 190. Histidine 241 lines the substrate pocket. Valine 279 serves as a coordination point for FAD. Cysteine 349 and cysteine 430 are joined by a disulfide. A glycan (N-linked (GlcNAc...) asparagine) is linked at asparagine 379. Position 390 (tyrosine 390) interacts with substrate. FAD contacts are provided by residues glutamate 475 and 482 to 487 (GWIDST). Substrate is bound at residue 482–483 (GW).

The protein belongs to the flavin monoamine oxidase family. FIG1 subfamily. Homodimer; non-covalently linked. FAD serves as cofactor. In terms of tissue distribution, expressed by the venom gland.

Its subcellular location is the secreted. It carries out the reaction an L-alpha-amino acid + O2 + H2O = a 2-oxocarboxylate + H2O2 + NH4(+). It catalyses the reaction L-leucine + O2 + H2O = 4-methyl-2-oxopentanoate + H2O2 + NH4(+). The enzyme catalyses L-phenylalanine + O2 + H2O = 3-phenylpyruvate + H2O2 + NH4(+). The catalysed reaction is L-tryptophan + O2 + H2O = indole-3-pyruvate + H2O2 + NH4(+). It carries out the reaction L-methionine + O2 + H2O = 4-methylsulfanyl-2-oxobutanoate + H2O2 + NH4(+). It catalyses the reaction L-isoleucine + O2 + H2O = (S)-3-methyl-2-oxopentanoate + H2O2 + NH4(+). The enzyme catalyses L-tyrosine + O2 + H2O = 3-(4-hydroxyphenyl)pyruvate + H2O2 + NH4(+). Functionally, catalyzes an oxidative deamination of predominantly hydrophobic and aromatic L-amino acids, thus producing hydrogen peroxide that may contribute to the diverse toxic effects of this enzyme. Is highly active on L-Met=L-Leu&gt;&gt;L-Phe&gt;L-Trp&gt;L-Tyr&gt;L-Ile, and weakly or not active on L-His, L-Arg, L-Val, L-Gln, L-Thr, L-Lys, and L-Ser. Exhibits a low myotoxicity (a mild myonecrosis is observed after injection in mice quadriceps muscle). In vitro, is cytotoxic to a lot of human cell lines, including AGS (IC(50)=22.7 ug/ml), MCF-7 (IC(50)=1.4 ug/ml), HL-60, HeLa and Jurkat cells, as well as to the parasite Leishmania brasiliensis (IC(50)=2.22 ug/ml). This cytotoxicity is dependent on the production of hydrogen peroxyde, since it is inhibited by catalase, a hydrogen peroxyde scavenger. The polypeptide is L-amino acid oxidase Lm29 (Lachesis muta (South American bushmaster)).